Here is a 527-residue protein sequence, read N- to C-terminus: MSENIRVSEVSDILRKQLEGINTNVQLDEIGTVLQVSDGVVRIYGLRNAEANELLEFDNGIKAIVMNLEEDNVGAVLLGPTDRIKEGFIVKRTKRIASIRVGESMLGRVIDPLGEPLDGKGLIGGELYEMPLERKAPGVIYRQPVNQPLQTGLKAVDAMIPIGRGQRELIIGDRQTGKTSIAIDTIINQRNNFLAGDPVYCIYVAIGQKGSTVASIVNTLREYGAMDYTIVVAATAGDPAALQYYAPFAGAAIGEYFRDTGRHALVVYDDLSKQAVAYREVSLILRRPSGREAYPGDIFYLHSRLLERAAKIIKEEEVAREMNDLPESLKGIVKVGGSLTALPIIETQAGDVSAYIPTNVISITDGQIFLETDLFNQGVRPAINVGISVSRVGGNAQIKAMKKVAGTLKMDQAQYRELEAFSKFSSDMDPITAMTIDKGRKNAQLLIQPQYSPMPVEQQIAILYCGTHGLLHDVPLENVQDFERSFIESLQLNHQEDVLDVLRTGVIDDNVTKAIEETAAMVAKQYL.

172 to 179 contributes to the ATP binding site; the sequence is GDRQTGKT.

The protein belongs to the ATPase alpha/beta chains family. F-type ATPases have 2 components, CF(1) - the catalytic core - and CF(0) - the membrane proton channel. CF(1) has five subunits: alpha(3), beta(3), gamma(1), delta(1), epsilon(1). CF(0) has three main subunits: a(1), b(2) and c(9-12). The alpha and beta chains form an alternating ring which encloses part of the gamma chain. CF(1) is attached to CF(0) by a central stalk formed by the gamma and epsilon chains, while a peripheral stalk is formed by the delta and b chains.

It is found in the cell inner membrane. It catalyses the reaction ATP + H2O + 4 H(+)(in) = ADP + phosphate + 5 H(+)(out). Produces ATP from ADP in the presence of a proton gradient across the membrane. The alpha chain is a regulatory subunit. The chain is ATP synthase subunit alpha from Bacteroides thetaiotaomicron (strain ATCC 29148 / DSM 2079 / JCM 5827 / CCUG 10774 / NCTC 10582 / VPI-5482 / E50).